Here is a 369-residue protein sequence, read N- to C-terminus: 4-hydroxy-3-methylbut-2-en-1-yl diphosphate synthase (flavodoxin) (369 aa).

[4Fe-4S] cluster contacts are provided by cysteine 270, cysteine 273, cysteine 305, and glutamate 312.

The protein belongs to the IspG family. The cofactor is [4Fe-4S] cluster.

It carries out the reaction (2E)-4-hydroxy-3-methylbut-2-enyl diphosphate + oxidized [flavodoxin] + H2O + 2 H(+) = 2-C-methyl-D-erythritol 2,4-cyclic diphosphate + reduced [flavodoxin]. It functions in the pathway isoprenoid biosynthesis; isopentenyl diphosphate biosynthesis via DXP pathway; isopentenyl diphosphate from 1-deoxy-D-xylulose 5-phosphate: step 5/6. In terms of biological role, converts 2C-methyl-D-erythritol 2,4-cyclodiphosphate (ME-2,4cPP) into 1-hydroxy-2-methyl-2-(E)-butenyl 4-diphosphate. The chain is 4-hydroxy-3-methylbut-2-en-1-yl diphosphate synthase (flavodoxin) from Pseudomonas putida (strain ATCC 47054 / DSM 6125 / CFBP 8728 / NCIMB 11950 / KT2440).